The following is a 202-amino-acid chain: MRGHPSLLLLYMALTTCLDTSPSEETDQEVFLGPPEAQSFLSSHTRIPRANHWDLELLTPGNLERECLEERCSWEEAREYFEDNTLTERFWESYIYNGKGGRGRVDVASLAVGLTGGILLIVLAGLGAFWYLRWRQHRGQQPCPQEAGLISPLSPLNPLGPPTPLPPPPPPPPGLPTYEQALAASGVHDAPPPPYTSLRRPH.

The N-terminal stretch at 1 to 23 (MRGHPSLLLLYMALTTCLDTSPS) is a signal peptide. A propeptide spanning residues 24–49 (EETDQEVFLGPPEAQSFLSSHTRIPR) is cleaved from the precursor. The Gla domain maps to 50 to 96 (ANHWDLELLTPGNLERECLEERCSWEEAREYFEDNTLTERFWESYIY). Topologically, residues 50–109 (ANHWDLELLTPGNLERECLEERCSWEEAREYFEDNTLTERFWESYIYNGKGGRGRVDVAS) are extracellular. Residues Cys67 and Cys72 are joined by a disulfide bond. Position 70 is a 4-carboxyglutamate (Glu70). The helical transmembrane segment at 110-130 (LAVGLTGGILLIVLAGLGAFW) threads the bilayer. Over 131 to 202 (YLRWRQHRGQ…PPYTSLRRPH (72 aa)) the chain is Cytoplasmic. Residues 143-202 (CPQEAGLISPLSPLNPLGPPTPLPPPPPPPPGLPTYEQALAASGVHDAPPPPYTSLRRPH) form a disordered region. A compositionally biased stretch (pro residues) spans 158 to 175 (PLGPPTPLPPPPPPPPGL). An LPXY motif; mediates binding to WW domain-containing proteins motif is present at residues 175-178 (LPTY). The short motif at 192-195 (PPPY) is the PPXY motif; mediates binding to WW domain-containing proteins element.

Interacts with NEDD4. Interacts (via cytoplasmic domain) with transcriptional coactivator YAP1. Gamma-carboxyglutamate residues are formed by vitamin K dependent carboxylation. These residues are essential for the binding of calcium. As to expression, widely expressed with highest levels in kidney. Also highly expressed in the thyroid.

It is found in the cell membrane. This chain is Transmembrane gamma-carboxyglutamic acid protein 2, found in Homo sapiens (Human).